A 357-amino-acid polypeptide reads, in one-letter code: tRNA pseudouridine synthase B (357 aa).

Residue Asp42 is the Nucleophile of the active site.

The protein belongs to the pseudouridine synthase TruB family. Type 1 subfamily.

It catalyses the reaction uridine(55) in tRNA = pseudouridine(55) in tRNA. Functionally, responsible for synthesis of pseudouridine from uracil-55 in the psi GC loop of transfer RNAs. In Treponema denticola (strain ATCC 35405 / DSM 14222 / CIP 103919 / JCM 8153 / KCTC 15104), this protein is tRNA pseudouridine synthase B.